A 292-amino-acid polypeptide reads, in one-letter code: Small ribosomal subunit biogenesis GTPase RsgA (292 aa).

A CP-type G domain is found at 64–221 (RSELFRPAVA…LVDTPGFSSL (158 aa)). GTP contacts are provided by residues 113–116 (NKMD) and 164–172 (GPSGVGKST). Zn(2+)-binding residues include Cys245, Cys250, His252, and Cys258.

Belongs to the TRAFAC class YlqF/YawG GTPase family. RsgA subfamily. Monomer. Associates with 30S ribosomal subunit, binds 16S rRNA. It depends on Zn(2+) as a cofactor.

It localises to the cytoplasm. Functionally, one of several proteins that assist in the late maturation steps of the functional core of the 30S ribosomal subunit. Helps release RbfA from mature subunits. May play a role in the assembly of ribosomal proteins into the subunit. Circularly permuted GTPase that catalyzes slow GTP hydrolysis, GTPase activity is stimulated by the 30S ribosomal subunit. This is Small ribosomal subunit biogenesis GTPase RsgA from Clostridium botulinum (strain ATCC 19397 / Type A).